The primary structure comprises 258 residues: 5'-nucleotidase SurE (258 aa).

4 residues coordinate a divalent metal cation: Asp-9, Asp-10, Ser-42, and Asn-96.

The protein belongs to the SurE nucleotidase family. A divalent metal cation serves as cofactor.

The protein localises to the cytoplasm. It carries out the reaction a ribonucleoside 5'-phosphate + H2O = a ribonucleoside + phosphate. In terms of biological role, nucleotidase that shows phosphatase activity on nucleoside 5'-monophosphates. The sequence is that of 5'-nucleotidase SurE from Campylobacter jejuni subsp. jejuni serotype O:6 (strain 81116 / NCTC 11828).